A 517-amino-acid polypeptide reads, in one-letter code: Intermediate filament family orphan 2 (517 aa).

One can recognise an IF rod domain in the interval 53-484; sequence NIHLLKGLNV…RLIKGSADRN (432 aa). Disordered stretches follow at residues 104-129, 330-349, and 478-517; these read EQAV…SSGA, KVAS…RFSD, and KGSA…PMVS. Positions 485–497 are enriched in low complexity; the sequence is SPSPSSVASSDSG. A compositionally biased stretch (acidic residues) spans 501–517; the sequence is EIQDEFEREADVEPMVS.

This sequence belongs to the intermediate filament family.

This is Intermediate filament family orphan 2 (IFFO2) from Homo sapiens (Human).